Reading from the N-terminus, the 414-residue chain is Tryptophan synthase beta chain (414 aa).

The segment at 1-26 is disordered; sequence MVSTFSRQDQNYKNDDLNQPSKEGRF. Basic and acidic residues predominate over residues 10–26; it reads QNYKNDDLNQPSKEGRF. K109 bears the N6-(pyridoxal phosphate)lysine mark.

This sequence belongs to the TrpB family. In terms of assembly, tetramer of two alpha and two beta chains. Requires pyridoxal 5'-phosphate as cofactor.

The enzyme catalyses (1S,2R)-1-C-(indol-3-yl)glycerol 3-phosphate + L-serine = D-glyceraldehyde 3-phosphate + L-tryptophan + H2O. Its pathway is amino-acid biosynthesis; L-tryptophan biosynthesis; L-tryptophan from chorismate: step 5/5. Its function is as follows. The beta subunit is responsible for the synthesis of L-tryptophan from indole and L-serine. This Prochlorococcus marinus (strain MIT 9312) protein is Tryptophan synthase beta chain.